Reading from the N-terminus, the 469-residue chain is Receptor-type adenylate cyclase (469 aa).

Over 1 to 59 (VDTAEKLSKNGCASNYGATQISVWSMARALNASIPPLTNPMTPSMTFRNSNAGRISGVA) the chain is Extracellular. N-linked (GlcNAc...) asparagine glycosylation occurs at Asn31. The chain crosses the membrane as a helical span at residues 60–80 (LVGVIIGGALALFLVVALGVV). The Cytoplasmic segment spans residues 81–469 (PYFFLHNTRD…IDLENDSTTS (389 aa)). In terms of domain architecture, Guanylate cyclase spans 103 to 257 (TLIFTDIESS…RTSNMAARTE (155 aa)). Mg(2+) is bound by residues Asp108 and Asp151.

Belongs to the adenylyl cyclase class-3 family. Mg(2+) serves as cofactor.

It localises to the cell membrane. The catalysed reaction is ATP = 3',5'-cyclic AMP + diphosphate. Could act as a receptor for an unknown ligand. This chain is Receptor-type adenylate cyclase (ESAG4C), found in Trypanosoma equiperdum.